The sequence spans 690 residues: Copper-exporting P-type ATPase B (690 aa).

Residues 1–64 lie on the Cytoplasmic side of the membrane; the sequence is MHEHDSHGEA…MEDFKKRFYV (64 aa). The interval 23-46 is disordered; the sequence is QHHEHHGHEEEHSAHHEKMKHSAD. A compositionally biased stretch (basic and acidic residues) spans 28-46; the sequence is HGHEEEHSAHHEKMKHSAD. The chain crosses the membrane as a helical span at residues 65–85; it reads STLLTIPILILSPAIQTFLGF. Residues 86–91 are Extracellular-facing; that stretch reads RVEFAG. The chain crosses the membrane as a helical span at residues 92 to 112; sequence SLYILFLLSSAVYFYGGYPFL. Topologically, residues 113 to 127 are cytoplasmic; sequence KGIFDELRRRQPGMM. A helical transmembrane segment spans residues 128–148; the sequence is TLIAVAISVAYFYSSAVVFGL. Topologically, residues 149–151 are extracellular; sequence KGK. Residues 152-172 form a helical membrane-spanning segment; sequence FFFWELATLIDIMLLGHYIEM. The Cytoplasmic portion of the chain corresponds to 173 to 303; it reads RSVLGASRAL…KSRTQDLANR (131 aa). A helical membrane pass occupies residues 304-324; that stretch reads AALLLTVIALTVGSVTLAIWL. The Extracellular segment spans residues 325-336; the sequence is AYIADFAFAIER. The helical transmembrane segment at 337 to 357 threads the bilayer; that stretch reads AVTVMVITCPHALGLAIPLVV. The Cytoplasmic portion of the chain corresponds to 358-640; sequence AVSTSLAAKS…RKTYSKMKQN (283 aa). Catalysis depends on aspartate 389, which acts as the 4-aspartylphosphate intermediate. Residues 390–391, 537–538, and lysine 565 each bind phosphate; these read KT and TG. Residues aspartate 583 and aspartate 587 each contribute to the Mg(2+) site. The chain crosses the membrane as a helical span at residues 641 to 661; that stretch reads LLWATGYNAFAIPLAAGVLYS. The Extracellular segment spans residues 662–663; it reads AG. The helical transmembrane segment at 664–684 threads the bilayer; it reads ILLSPAVGAILMSLSTVIVAI. Residues 685 to 690 are Cytoplasmic-facing; that stretch reads NARLLR.

This sequence belongs to the cation transport ATPase (P-type) (TC 3.A.3) family. Type IB subfamily.

It is found in the cell membrane. The enzyme catalyses Cu(2+)(in) + ATP + H2O = Cu(2+)(out) + ADP + phosphate + H(+). Activated by Cu(2+) and to a lesser extent by Ag(+) and Cu(+). In terms of biological role, involved in copper export. This is Copper-exporting P-type ATPase B (copB) from Archaeoglobus fulgidus (strain ATCC 49558 / DSM 4304 / JCM 9628 / NBRC 100126 / VC-16).